A 1017-amino-acid chain; its full sequence is DNA polymerase (1017 aa).

It belongs to the DNA polymerase type-B family. In terms of assembly, heterodimer with the terminal protein; this heterodimer binds to bp 9 to 18 of the genome. Forms a complex with viral pTP, DBP and hosts NFIA and POU2F1/OCT1 for initiation of replication.

Its subcellular location is the host nucleus. It catalyses the reaction DNA(n) + a 2'-deoxyribonucleoside 5'-triphosphate = DNA(n+1) + diphosphate. Functionally, eukaryotic-type DNA polymerase involved in viral genomic replication. DNA synthesis is protein primed, and acts in a strand displacement replication. Assembles in complex with viral pTP, DBP, host NFIA and host POU2F1/OCT1 on viral origin of replication. The polymerase covalently transfers dCMP onto pTP, thereby initiating complementary strand synthesis. The polypeptide is DNA polymerase (Bovine adenovirus 2 (BAdV-2)).